The chain runs to 212 residues: Outer surface protein C (212 aa).

The first 18 residues, 1 to 18 (MKKNTLSAILMTLFLFIS), serve as a signal peptide directing secretion. Residue cysteine 19 is the site of N-palmitoyl cysteine attachment. Cysteine 19 carries S-diacylglycerol cysteine lipidation.

This sequence belongs to the OspC lipoprotein family. Homodimer. Interacts with tick Ixodes ricinus salivary protein Iric-1. Binds human (host) plasminogen. The N-terminus is blocked.

It localises to the cell outer membrane. The protein localises to the cell surface. In terms of biological role, major immunodominant protein in mammalian hosts. Required for initial stages of mammalian infection. Inhibits macrophage-mediated phagocytosis of the bacteria. Binds human plasminogen; this probably confers an extracellular protease activity on the bacteria that allows it to traverse tissue. Unlike closely related strain B31, its interaction with Ixodes ricinus salivary protein Iric-1 does not protect against antibody-mediated destruction in vitro. The chain is Outer surface protein C from Borreliella afzelii (strain PKo) (Borrelia afzelii).